We begin with the raw amino-acid sequence, 507 residues long: CWF19-like protein DRN1 (507 aa).

S242 carries the post-translational modification Phosphoserine.

This sequence belongs to the CWF19 family. As to quaternary structure, interacts with DBR1. Interacts with SYF1, a component of the NTC complex. Interacts with lariat-introns and lariat-intermediates.

The protein resides in the nucleus. The protein localises to the cytoplasm. Involved in branched RNA metabolism, modulating the turnover of lariat-intron pre-mRNAs by the lariat-debranching enzyme DBR1. Enhances the debranching activity of DBR1 in vitro. The sequence is that of CWF19-like protein DRN1 (DRN1) from Saccharomyces cerevisiae (strain ATCC 204508 / S288c) (Baker's yeast).